Consider the following 452-residue polypeptide: Sodium-coupled neutral amino acid transporter 7 (452 aa).

11 consecutive transmembrane segments (helical) span residues 46-66 (AVFI…PAAF), 74-94 (AAIS…VILA), 120-140 (LCEV…FIII), 168-188 (FTIS…REIS), 195-215 (FLSV…CIWP), 234-256 (VFNA…PVYG), 272-292 (IAMF…FLLF), 309-329 (IAVA…YPIL), 361-381 (VLQT…IPDI), 385-405 (ISLI…LCLI), and 419-439 (SWWA…FIFG).

It belongs to the amino acid/polyamine transporter 2 family.

Its subcellular location is the lysosome membrane. It localises to the cell projection. The protein resides in the axon. The enzyme catalyses L-asparagine(in) + Na(+)(in) = L-asparagine(out) + Na(+)(out). It carries out the reaction L-glutamine(in) + Na(+)(in) = L-glutamine(out) + Na(+)(out). In terms of biological role, symporter that selectively cotransports sodium ions and amino acids, such as L-glutamine and L-asparagine from the lysosome into the cytoplasm and may participates in mTORC1 activation. The transport activity requires an acidic lysosomal lumen. The sequence is that of Sodium-coupled neutral amino acid transporter 7 from Xenopus laevis (African clawed frog).